A 207-amino-acid chain; its full sequence is NADH-quinone oxidoreductase subunit C (207 aa).

Belongs to the complex I 30 kDa subunit family. NDH-1 is composed of 14 different subunits. Subunits NuoB, C, D, E, F, and G constitute the peripheral sector of the complex.

The protein localises to the cell inner membrane. The catalysed reaction is a quinone + NADH + 5 H(+)(in) = a quinol + NAD(+) + 4 H(+)(out). Functionally, NDH-1 shuttles electrons from NADH, via FMN and iron-sulfur (Fe-S) centers, to quinones in the respiratory chain. The immediate electron acceptor for the enzyme in this species is believed to be ubiquinone. Couples the redox reaction to proton translocation (for every two electrons transferred, four hydrogen ions are translocated across the cytoplasmic membrane), and thus conserves the redox energy in a proton gradient. The polypeptide is NADH-quinone oxidoreductase subunit C (Bordetella pertussis (strain Tohama I / ATCC BAA-589 / NCTC 13251)).